Reading from the N-terminus, the 212-residue chain is MNSKFIVIEGLEGAGKTTARDTVVATLRAQGINDIVFTREPGGTPLAEKLRDLIKQGIDGEVLTDKAEVLMLYAARVQLVENVIKPALARGSWVVGDRHDLSSQAYQGGGRGIDINLMTSLRDTVLGEFRPDLTLYLDLPPVIGLARARARGELDRIEQESLAFFERTRERYLELAATDSSIKTIDASQPLEQVSESISQVLKQWLTSRETA.

10–17 (GLEGAGKT) is a binding site for ATP.

The protein belongs to the thymidylate kinase family.

It carries out the reaction dTMP + ATP = dTDP + ADP. Phosphorylation of dTMP to form dTDP in both de novo and salvage pathways of dTTP synthesis. The polypeptide is Thymidylate kinase (Yersinia enterocolitica serotype O:8 / biotype 1B (strain NCTC 13174 / 8081)).